The sequence spans 681 residues: Envelope glycoprotein (681 aa).

The signal sequence occupies residues 1-18; the sequence is MKTTCLFISLILIQGIKT. Residues 19–648 are Extracellular-facing; sequence LPILEIASNN…GLGGKWWTSD (630 aa). A receptor-binding region spans residues 38–188; it reads SGTLQKTEDV…FSRQGQGYRH (151 aa). Residues N94, N171, N190, N202, N207, N219, N223, and N255 are each glycosylated (N-linked (GlcNAc...) asparagine; by host). Residues 223–351 are disordered; that stretch reads NQTCAPSKIP…STNNTSKNNF (129 aa). Low complexity predominate over residues 244 to 259; sequence PTSTPTDATTLNTTDP. The interval 277-455 is mucin-like region; sequence EPYTTSDAVT…PFLDGLINAP (179 aa). 2 stretches are compositionally biased toward polar residues: residues 278–290 and 308–341; these read PYTT…KQGL and EGNN…TTAI. N-linked (GlcNAc...) asparagine; by host glycosylation is found at N310, N323, N326, N337, N344, N345, N350, N360, N389, N397, N408, and N487. The span at 342-351 shows a compositional bias: low complexity; the sequence is STNNTSKNNF. The segment covering 366 to 414 has biased composition (polar residues); the sequence is TQSTATENEQTSAPSKTTLPPTGNLTTAKSTNNTKGPTTTAPNMTNGHL. A disordered region spans residues 366–425; that stretch reads TQSTATENEQTSAPSKTTLPPTGNLTTAKSTNNTKGPTTTAPNMTNGHLTSPSPTPNPTT. Residues 529–549 form a fusion peptide region; it reads GLSWIPFFGPGIEGLYTAGLI. N564 and N619 each carry an N-linked (GlcNAc...) asparagine; by host glycan. The helical transmembrane segment at 649 to 669 threads the bilayer; it reads WGVLTNLGILLLLSIAVLIAL. At 670 to 681 the chain is on the cytoplasmic side; it reads SCICRIFTKYIG. S-palmitoyl cysteine; by host attachment occurs at residues C671 and C673.

It belongs to the filoviruses glycoprotein family. Homotrimer; each monomer consists of a GP1 and a GP2 subunit linked by disulfide bonds. The resulting peplomers (GP1,2) protrude from the virus surface as spikes. GP1,2 interacts with human CD209 and CLEC4M (collectively referred to as DC-SIGN(R)). Asialoglycoprotein receptor (ASGP-R) may be a liver-specific receptor for GP1,2. Members of the Tyro3 receptor tyrosine kinase family may be cell entry factors interacting with GP1,2. N-glycosylated. Post-translationally, O-glycosylated in the mucin-like region. In terms of processing, specific enzymatic cleavages in vivo yield mature proteins. The precursor is processed into GP1 and GP2 by host cell furin in the trans Golgi, and maybe by other host proteases, to yield the mature GP1 and GP2 proteins. The cleavage site corresponds to the furin optimal cleavage sequence [KR]-X-[KR]-R. GP1 is phosphorylated on serine residues between residues 260 and 273.

Its subcellular location is the virion membrane. The protein resides in the host cell membrane. GP1 is responsible for binding to the receptor(s) on target cells. Interacts with CD209/DC-SIGN and CLEC4M/DC-SIGNR which act as cofactors for virus entry into the host cell. Binding to CD209 and CLEC4M, which are respectively found on dendritic cells (DCs), and on endothelial cells of liver sinusoids and lymph node sinuses, facilitate infection of macrophages and endothelial cells. These interactions not only facilitate virus cell entry, but also allow capture of viral particles by DCs and subsequent transmission to susceptible cells without DCs infection (trans infection). Its function is as follows. GP2 acts as a class I viral fusion protein. Under the current model, the protein has at least 3 conformational states: pre-fusion native state, pre-hairpin intermediate state, and post-fusion hairpin state. During viral and target cell membrane fusion, the coiled coil regions (heptad repeats) assume a trimer-of-hairpins structure, positioning the fusion peptide in close proximity to the C-terminal region of the ectodomain. The formation of this structure appears to drive apposition and subsequent fusion of viral and target cell membranes. Responsible for penetration of the virus into the cell cytoplasm by mediating the fusion of the membrane of the endocytosed virus particle with the endosomal membrane. Low pH in endosomes induces an irreversible conformational change in GP2, releasing the fusion hydrophobic peptide. This is Envelope glycoprotein (GP) from Lake Victoria marburgvirus (strain Popp-67) (MARV).